Reading from the N-terminus, the 100-residue chain is Small ribosomal subunit protein uS14c (100 aa).

This sequence belongs to the universal ribosomal protein uS14 family. Part of the 30S ribosomal subunit.

Its subcellular location is the plastid. Binds 16S rRNA, required for the assembly of 30S particles. This is Small ribosomal subunit protein uS14c (rps14) from Cuscuta reflexa (Southern Asian dodder).